The sequence spans 657 residues: Replication restart protein PriA (657 aa).

The 167-residue stretch at 143-309 (ITASTGARSF…LRGAVRRLPL (167 aa)) folds into the Helicase ATP-binding domain. 156 to 163 (GVTGSGKT) contacts ATP. The DEAH box motif lies at 252–255 (DEEH). The Zn(2+) site is built by C366, C369, C375, C378, C393, C396, C406, and C409. Residues 390–570 (AMQCHYCGRQ…PFVRLIRFVF (181 aa)) form the Helicase C-terminal domain.

This sequence belongs to the helicase family. PriA subfamily. As to quaternary structure, component of the replication restart primosome. Requires Zn(2+) as cofactor.

It carries out the reaction Couples ATP hydrolysis with the unwinding of duplex DNA by translocating in the 3'-5' direction.. The catalysed reaction is ATP + H2O = ADP + phosphate + H(+). Its function is as follows. Initiates the restart of stalled replication forks, which reloads the replicative helicase on sites other than the origin of replication. Recognizes and binds to abandoned replication forks and remodels them to uncover a helicase loading site. Promotes assembly of the primosome at these replication forks. In Treponema pallidum (strain Nichols), this protein is Replication restart protein PriA.